A 610-amino-acid polypeptide reads, in one-letter code: Scarecrow-like protein 11 (610 aa).

Disordered stretches follow at residues 32–54 (NNLF…PPTV), 98–159 (QQSP…RRNK), and 186–220 (QEEE…HKTN). Low complexity-rich tracts occupy residues 41 to 52 (SQNQSSPNDSPP) and 99 to 119 (QSPE…GDQD). Polar residues-rich tracts occupy residues 123–137 (PSTT…SSGE) and 209–220 (GSSNKSKTHKTN). A GRAS domain is found at 215-598 (KTHKTNTVDL…RVIYAFSCWK (384 aa)). Residues 222–283 (VDLRSLLTQC…ARITGNISPP (62 aa)) form a leucine repeat I (LRI) region. A VHIID region spans residues 302–367 (YKLFVHTCPI…GGPPMLRVTG (66 aa)). The VHIID signature appears at 333-337 (LHIVD). The leucine repeat II (LRII) stretch occupies residues 383 to 415 (ETGRRLKRFCDQFNVPFEFNFIAKKWETITLDE). The tract at residues 424–520 (TVVNCIHRLQ…RELLVRDAMS (97 aa)) is PFYRE. The segment at 523–598 (SCEGAERFAR…RVIYAFSCWK (76 aa)) is SAW.

This sequence belongs to the GRAS family. As to expression, highly expressed in roots and at lower levels in leaves and sepals. Expressed in siliques.

The protein resides in the nucleus. In terms of biological role, probable transcription factor involved in plant development. This is Scarecrow-like protein 11 (SCL11) from Arabidopsis thaliana (Mouse-ear cress).